The following is a 188-amino-acid chain: Peptidyl-tRNA hydrolase (188 aa).

A tRNA-binding site is contributed by Y14. H19 (proton acceptor) is an active-site residue. The tRNA site is built by Y60 and N62.

It belongs to the PTH family. In terms of assembly, monomer.

It localises to the cytoplasm. The catalysed reaction is an N-acyl-L-alpha-aminoacyl-tRNA + H2O = an N-acyl-L-amino acid + a tRNA + H(+). Its function is as follows. Hydrolyzes ribosome-free peptidyl-tRNAs (with 1 or more amino acids incorporated), which drop off the ribosome during protein synthesis, or as a result of ribosome stalling. Functionally, catalyzes the release of premature peptidyl moieties from peptidyl-tRNA molecules trapped in stalled 50S ribosomal subunits, and thus maintains levels of free tRNAs and 50S ribosomes. The polypeptide is Peptidyl-tRNA hydrolase (Mycoplasmopsis agalactiae (strain NCTC 10123 / CIP 59.7 / PG2) (Mycoplasma agalactiae)).